We begin with the raw amino-acid sequence, 132 residues long: Fatty acid-binding protein, intestinal (132 aa).

A2 is modified (N-acetylalanine). Residues W83 and R107 each contribute to the hexadecanoate site. Tetradecanoate is bound by residues W83 and R107.

It belongs to the calycin superfamily. Fatty-acid binding protein (FABP) family. Expressed in the small intestine. Expression in the mucosal cells of the ileum extends from the midvillar region to the villus tips.

The protein localises to the cytoplasm. In terms of biological role, FABPs are thought to play a role in the intracellular transport of long-chain fatty acids and their acyl-CoA esters. FABP2 is probably involved in triglyceride-rich lipoprotein synthesis. Binds saturated long-chain fatty acids with a high affinity, but binds with a lower affinity to unsaturated long-chain fatty acids. FABP2 may also help maintain energy homeostasis by functioning as a lipid sensor. The polypeptide is Fatty acid-binding protein, intestinal (Fabp2) (Rattus norvegicus (Rat)).